A 191-amino-acid polypeptide reads, in one-letter code: Ankyrin repeat domain-containing protein 22 (191 aa).

4 ANK repeats span residues 39–68 (NGDT…NVNL), 72–100 (KERT…MPVL), 101–130 (LIGY…EVNA), and 134–163 (YGCT…DPTI).

This is Ankyrin repeat domain-containing protein 22 (ANKRD22) from Homo sapiens (Human).